Consider the following 230-residue polypeptide: U2 small nuclear ribonucleoprotein A' (230 aa).

5 LRR repeats span residues Ser15 to Thr36, Gly48 to Glu69, His71 to Glu92, Thr93 to Ala114, and Lys115 to Lys136. The region spanning Asn149 to Met187 is the LRRCT domain.

This sequence belongs to the U2 small nuclear ribonucleoprotein A family. In terms of assembly, associated with the spliceosome.

The protein resides in the nucleus. In terms of biological role, involved in pre-mRNA splicing. The sequence is that of U2 small nuclear ribonucleoprotein A' (LEA1) from Yarrowia lipolytica (strain CLIB 122 / E 150) (Yeast).